The primary structure comprises 370 residues: Pyruvate dehydrogenase E1 component subunit alpha (370 aa).

In terms of assembly, heterodimer of an alpha and a beta chain. Thiamine diphosphate serves as cofactor.

It catalyses the reaction N(6)-[(R)-lipoyl]-L-lysyl-[protein] + pyruvate + H(+) = N(6)-[(R)-S(8)-acetyldihydrolipoyl]-L-lysyl-[protein] + CO2. In terms of biological role, the pyruvate dehydrogenase complex catalyzes the overall conversion of pyruvate to acetyl-CoA and CO(2). It contains multiple copies of three enzymatic components: pyruvate dehydrogenase (E1), dihydrolipoamide acetyltransferase (E2) and lipoamide dehydrogenase (E3). The sequence is that of Pyruvate dehydrogenase E1 component subunit alpha (pdhA) from Staphylococcus aureus (strain COL).